The following is a 382-amino-acid chain: Alanine racemase 1 (382 aa).

Lysine 39 acts as the Proton acceptor; specific for D-alanine in catalysis. Lysine 39 is modified (N6-(pyridoxal phosphate)lysine). Arginine 138 contacts substrate. Residue tyrosine 265 is the Proton acceptor; specific for L-alanine of the active site. Methionine 312 is a substrate binding site.

The protein belongs to the alanine racemase family. Requires pyridoxal 5'-phosphate as cofactor.

It carries out the reaction L-alanine = D-alanine. Its pathway is amino-acid biosynthesis; D-alanine biosynthesis; D-alanine from L-alanine: step 1/1. Its function is as follows. Catalyzes the interconversion of L-alanine and D-alanine. May also act on other amino acids. In Staphylococcus aureus (strain MRSA252), this protein is Alanine racemase 1 (alr1).